The chain runs to 209 residues: dITP/XTP pyrophosphatase (209 aa).

7-12 (SSHGYK) contacts substrate. Asp-70 serves as the catalytic Proton acceptor. Asp-70 is a Mg(2+) binding site. Substrate contacts are provided by residues Ser-71, 154–157 (FGYD), Lys-177, and 182–183 (HR).

The protein belongs to the HAM1 NTPase family. In terms of assembly, homodimer. Mg(2+) serves as cofactor.

It catalyses the reaction XTP + H2O = XMP + diphosphate + H(+). The enzyme catalyses dITP + H2O = dIMP + diphosphate + H(+). It carries out the reaction ITP + H2O = IMP + diphosphate + H(+). Functionally, pyrophosphatase that catalyzes the hydrolysis of nucleoside triphosphates to their monophosphate derivatives, with a high preference for the non-canonical purine nucleotides XTP (xanthosine triphosphate), dITP (deoxyinosine triphosphate) and ITP. Seems to function as a house-cleaning enzyme that removes non-canonical purine nucleotides from the nucleotide pool, thus preventing their incorporation into DNA/RNA and avoiding chromosomal lesions. The polypeptide is dITP/XTP pyrophosphatase (Chlamydia muridarum (strain MoPn / Nigg)).